Reading from the N-terminus, the 204-residue chain is Small ribosomal subunit protein uS4 (204 aa).

The region spanning Arg92–Ile153 is the S4 RNA-binding domain.

The protein belongs to the universal ribosomal protein uS4 family. Part of the 30S ribosomal subunit. Contacts protein S5. The interaction surface between S4 and S5 is involved in control of translational fidelity.

Functionally, one of the primary rRNA binding proteins, it binds directly to 16S rRNA where it nucleates assembly of the body of the 30S subunit. With S5 and S12 plays an important role in translational accuracy. In Streptomyces coelicolor (strain ATCC BAA-471 / A3(2) / M145), this protein is Small ribosomal subunit protein uS4.